Reading from the N-terminus, the 205-residue chain is MIRRKKDKFSLLLTEIAKNIDETAEYFVNFKVTNQTTLKEFADTLKEYETKGDNHVHVMIKELNKAFITPIEREDILQLTNSLDDVLDGIEHFSAMMEIFSITSSDEHIDKFSGYIRECAKEILITIELLAENRLKDIQPHAIKIKEYEHSCDNLHRKSLKNLFGNETDPIKVIQYREIYETLEEIADSCQSVANNLETIIMKNA.

The protein belongs to the UPF0111 family.

The polypeptide is UPF0111 protein YkaA (ykaA) (Bacillus subtilis (strain 168)).